The following is a 356-amino-acid chain: UDP-N-acetylenolpyruvoylglucosamine reductase (356 aa).

The region spanning 19–227 (LGGPAARFCS…RDAVLSLRRS (209 aa)) is the FAD-binding PCMH-type domain. Residue arginine 167 is part of the active site. Catalysis depends on serine 244, which acts as the Proton donor. Glutamate 348 is an active-site residue.

It belongs to the MurB family. Requires FAD as cofactor.

The protein localises to the cytoplasm. The catalysed reaction is UDP-N-acetyl-alpha-D-muramate + NADP(+) = UDP-N-acetyl-3-O-(1-carboxyvinyl)-alpha-D-glucosamine + NADPH + H(+). The protein operates within cell wall biogenesis; peptidoglycan biosynthesis. Cell wall formation. This chain is UDP-N-acetylenolpyruvoylglucosamine reductase, found in Thermobifida fusca (strain YX).